Consider the following 205-residue polypeptide: Adenylyl-sulfate kinase (205 aa).

31–38 (GLSGAGKS) lines the ATP pocket. Ser-105 serves as the catalytic Phosphoserine intermediate.

It belongs to the APS kinase family.

It catalyses the reaction adenosine 5'-phosphosulfate + ATP = 3'-phosphoadenylyl sulfate + ADP + H(+). The protein operates within sulfur metabolism; hydrogen sulfide biosynthesis; sulfite from sulfate: step 2/3. Functionally, catalyzes the synthesis of activated sulfate. This is Adenylyl-sulfate kinase from Shewanella baltica (strain OS223).